The sequence spans 475 residues: Ribulose bisphosphate carboxylase large chain (475 aa).

Positions 1–2 (MA) are excised as a propeptide. N-acetylproline is present on Pro3. The residue at position 14 (Lys14) is an N6,N6,N6-trimethyllysine. Substrate-binding residues include Asn123 and Thr173. Residue Lys175 is the Proton acceptor of the active site. Lys177 is a binding site for substrate. 3 residues coordinate Mg(2+): Lys201, Asp203, and Glu204. At Lys201 the chain carries N6-carboxylysine. His294 (proton acceptor) is an active-site residue. 3 residues coordinate substrate: Arg295, His327, and Ser379.

This sequence belongs to the RuBisCO large chain family. Type I subfamily. In terms of assembly, heterohexadecamer of 8 large chains and 8 small chains; disulfide-linked. The disulfide link is formed within the large subunit homodimers. Mg(2+) is required as a cofactor. In terms of processing, the disulfide bond which can form in the large chain dimeric partners within the hexadecamer appears to be associated with oxidative stress and protein turnover.

It localises to the plastid. Its subcellular location is the chloroplast. The catalysed reaction is 2 (2R)-3-phosphoglycerate + 2 H(+) = D-ribulose 1,5-bisphosphate + CO2 + H2O. It catalyses the reaction D-ribulose 1,5-bisphosphate + O2 = 2-phosphoglycolate + (2R)-3-phosphoglycerate + 2 H(+). Its function is as follows. RuBisCO catalyzes two reactions: the carboxylation of D-ribulose 1,5-bisphosphate, the primary event in carbon dioxide fixation, as well as the oxidative fragmentation of the pentose substrate in the photorespiration process. Both reactions occur simultaneously and in competition at the same active site. The protein is Ribulose bisphosphate carboxylase large chain of Oedogonium cardiacum (Filamentous green alga).